A 188-amino-acid polypeptide reads, in one-letter code: Protein SSX5 (188 aa).

In terms of domain architecture, KRAB-related spans 20-83 (KMQKAFDDIA…KRVADFQGND (64 aa)). Residues 78–188 (DFQGNDFDND…EISDPQEDDE (111 aa)) are disordered. Basic and acidic residues predominate over residues 112-122 (TPEKPAEEGND). The span at 144-155 (KLNTSEKVNKTS) shows a compositional bias: polar residues. The span at 156–170 (GPKRGKHAWTHRVRE) shows a compositional bias: basic residues. Acidic residues predominate over residues 179–188 (EISDPQEDDE).

Belongs to the SSX family.

In terms of biological role, could act as a modulator of transcription. The protein is Protein SSX5 (SSX5) of Homo sapiens (Human).